Reading from the N-terminus, the 444-residue chain is Probable D-serine dehydratase (444 aa).

The residue at position 118 (Lys118) is an N6-(pyridoxal phosphate)lysine.

This sequence belongs to the serine/threonine dehydratase family. DsdA subfamily. The cofactor is pyridoxal 5'-phosphate.

It carries out the reaction D-serine = pyruvate + NH4(+). This chain is Probable D-serine dehydratase, found in Acinetobacter baumannii (strain ACICU).